The sequence spans 337 residues: 6-phosphogluconolactonase (337 aa).

Belongs to the cycloisomerase 2 family.

It carries out the reaction 6-phospho-D-glucono-1,5-lactone + H2O = 6-phospho-D-gluconate + H(+). The protein operates within carbohydrate degradation; pentose phosphate pathway; D-ribulose 5-phosphate from D-glucose 6-phosphate (oxidative stage): step 2/3. Its function is as follows. Catalyzes the hydrolysis of 6-phosphogluconolactone to 6-phosphogluconate. This chain is 6-phosphogluconolactonase, found in Blochmanniella pennsylvanica (strain BPEN).